We begin with the raw amino-acid sequence, 203 residues long: Probable chemoreceptor glutamine deamidase CheD (203 aa).

This sequence belongs to the CheD family.

The enzyme catalyses L-glutaminyl-[protein] + H2O = L-glutamyl-[protein] + NH4(+). Its function is as follows. Probably deamidates glutamine residues to glutamate on methyl-accepting chemotaxis receptors (MCPs), playing an important role in chemotaxis. In Herminiimonas arsenicoxydans, this protein is Probable chemoreceptor glutamine deamidase CheD.